Consider the following 192-residue polypeptide: UPF0149 protein VIBHAR_03551 (192 aa).

Belongs to the UPF0149 family.

This chain is UPF0149 protein VIBHAR_03551, found in Vibrio campbellii (strain ATCC BAA-1116).